Reading from the N-terminus, the 434-residue chain is MTAYHFVGIKGTGMSALAQVLHDLGYTVQGSDVEKWFFTQKALEERGIPVLPFSKDNIRPGYTVIAGNAFPDTHEEIEAARQLGVPVIRYHRFLGQLAGKFTSIAVTGSHGKTTTTGLLAHVMQGAHPTSYLIGDGTGKGEPGSKYFVFEACEYRRHFLSYFPDYAIMTNIDFDHPDYFANVDDVFSAFQQMANQVKKAIVACGDDPYLPNIQAKVPILFYGFGEENDFQARNIVKTTEGMAFDVFVRNTFFASFAIPRFGTHNVLNALAVIALCHYEGVDAGTIAKRLQTFQGVKRRFSEKTVGRQVLIDDYAHHPREITATLEAARQKYPGREVVAIFQPHTYTRTQTFLREFAESLLQADHVYLCDIFGSAREHEGKLTIRDLQAQIPRSQLLEEQNVAVLKQHQDAVLVFMGAGDIQKFQQAYERAVLSA.

108–114 is a binding site for ATP; it reads GSHGKTT.

Belongs to the MurCDEF family.

The protein resides in the cytoplasm. It carries out the reaction UDP-N-acetyl-alpha-D-muramate + L-alanine + ATP = UDP-N-acetyl-alpha-D-muramoyl-L-alanine + ADP + phosphate + H(+). Its pathway is cell wall biogenesis; peptidoglycan biosynthesis. Its function is as follows. Cell wall formation. The protein is UDP-N-acetylmuramate--L-alanine ligase of Geobacillus kaustophilus (strain HTA426).